A 429-amino-acid polypeptide reads, in one-letter code: Light-independent protochlorophyllide reductase subunit N (429 aa).

Cys-32, Cys-57, and Cys-118 together coordinate [4Fe-4S] cluster.

It belongs to the BchN/ChlN family. Protochlorophyllide reductase is composed of three subunits; BchL, BchN and BchB. Forms a heterotetramer of two BchB and two BchN subunits. [4Fe-4S] cluster serves as cofactor.

It carries out the reaction chlorophyllide a + oxidized 2[4Fe-4S]-[ferredoxin] + 2 ADP + 2 phosphate = protochlorophyllide a + reduced 2[4Fe-4S]-[ferredoxin] + 2 ATP + 2 H2O. It participates in porphyrin-containing compound metabolism; bacteriochlorophyll biosynthesis (light-independent). Functionally, component of the dark-operative protochlorophyllide reductase (DPOR) that uses Mg-ATP and reduced ferredoxin to reduce ring D of protochlorophyllide (Pchlide) to form chlorophyllide a (Chlide). This reaction is light-independent. The NB-protein (BchN-BchB) is the catalytic component of the complex. This is Light-independent protochlorophyllide reductase subunit N from Rhodopseudomonas palustris (strain ATCC BAA-98 / CGA009).